Reading from the N-terminus, the 1043-residue chain is Glutamate receptor ionotropic, NMDA 3B (1043 aa).

A signal peptide spans Met1–Gly22. Topologically, residues His23–His574 are extracellular. 4 N-linked (GlcNAc...) asparagine glycosylation sites follow: Asn69, Asn344, Asn451, and Asn465. Cystine bridges form between Cys439–Cys475 and Cys445–Cys476. Residues Ser531, Ser533, and Arg538 each coordinate glycine. Positions 533 and 538 each coordinate D-serine. The helical transmembrane segment at Trp575–Val594 threads the bilayer. Topologically, residues Tyr595–Ser615 are cytoplasmic. The segment at residues Tyr616–Leu627 is an intramembrane region (discontinuously helical). Topologically, residues Phe628–Thr641 are cytoplasmic. A helical transmembrane segment spans residues Gly642–Thr661. At Ala662–Ala832 the chain is on the extracellular side. Residue Ser701 participates in glycine binding. The D-serine site is built by Ser701, Ala702, and Asp745. Position 745 (Asp745) interacts with glycine. N-linked (GlcNAc...) asparagine glycosylation is present at Asn786. Residues Gly833–Ser848 traverse the membrane as a helical segment. Topologically, residues Ser849–Glu1043 are cytoplasmic. Disordered regions lie at residues Ala882–Ala924 and Gly1012–Glu1043. The segment at Gln979–Gly1012 is involved in the trafficking and surface expression of NMDARs. Over residues Gln1024–His1035 the composition is skewed to low complexity.

The protein belongs to the glutamate-gated ion channel (TC 1.A.10.1) family. NR3B/GRIN3B subfamily. In terms of assembly, forms heterotetrameric channels that contain at least two GluN1 subunits and at least a combination of one GluN2 and one GluN3 subunits (in vitro). Forms heterotetrameric channels composed of two GluN1/zeta subunits (GRIN1), and two identical GluN3 subunits (GRIN3A or GRIN3B) (in vitro). Does not form functional homomeric channels.

It localises to the cell membrane. The protein localises to the postsynaptic cell membrane. It catalyses the reaction Ca(2+)(in) = Ca(2+)(out). The enzyme catalyses Na(+)(in) = Na(+)(out). In terms of biological role, component of a non-conventional N-methyl-D-aspartate (NMDA) receptors (NMDARs) that function as heterotetrameric, ligand-gated cation channels with low calcium permeability and low voltage-dependent block by Mg(2+). Forms glutamatergic receptor complexes with GluN1 and GluN2 subunits which are activated by glycine binding to the GluN1 and GluN3 subunits and L-glutamate binding to GluN2 subunits. Forms excitatory glycinergic receptor complexes with GluN1 alone which are activated by glycine binding to the GluN1 and GluN3 subunits. GluN3B subunit also binds D-serine and, in the absence of glycine, activates glycinergic receptor complexes, but with lower efficacy than glycine. Each GluN3 subunit confers differential attributes to channel properties, including activation, deactivation and desensitization kinetics, pH sensitivity, Ca2(+) permeability, and binding to allosteric modulators. In Homo sapiens (Human), this protein is Glutamate receptor ionotropic, NMDA 3B.